A 213-amino-acid chain; its full sequence is Protein HSH49 (213 aa).

2 RRM domains span residues asparagine 9–asparagine 88 and alanine 108–lysine 185.

Interacts with RDS3.

It is found in the nucleus. Its function is as follows. Possible SF3b-like factor. In Saccharomyces cerevisiae (strain ATCC 204508 / S288c) (Baker's yeast), this protein is Protein HSH49 (HSH49).